The following is a 338-amino-acid chain: Nickel transporter NixA (338 aa).

8 helical membrane-spanning segments follow: residues 11–31 (WLPYIAIVILLHVIGFSFLWI), 37–57 (HILFGMGILAYTLGLRHAFDA), 79–99 (GVGFYFSIGHSSVVFLMAVFL), 127–147 (FFLVLIGVLNLIILISLINLF), 187–207 (VLPLGFLFGLGFDTASEIALL), 217–237 (AISFIGILSLPILFASGMSLL), 266–286 (ITAISVMAALVIGMIELLQIL), and 307–327 (YLGYILVALFLITWLISSLIW).

This sequence belongs to the NiCoT transporter (TC 2.A.52) family.

Its subcellular location is the cell membrane. Functionally, secondary nickel transporter. Required for full urease activity. The chain is Nickel transporter NixA from Staphylococcus aureus (strain NCTC 8325 / PS 47).